Here is a 585-residue protein sequence, read N- to C-terminus: Rab GTPase-binding effector protein 2 (585 aa).

The residue at position 2 (Ala2) is an N-acetylalanine. Residues 27–183 are a coiled coil; it reads QEGAKVEAES…ELIQEIQRRP (157 aa). Disordered stretches follow at residues 178 to 265, 381 to 408, and 491 to 515; these read EIQR…ASLV, ENQGLRAEQPSSSVPRVLEQDEGWEESL, and EEQSKAKRQEVLRPSQGTGRTEEAQ. Phosphoserine occurs at positions 188, 192, 198, and 202. Residues 288–540 adopt a coiled-coil conformation; it reads NQWEQLQLEG…QAELETSEQV (253 aa). Over residues 491 to 501 the composition is skewed to basic and acidic residues; the sequence is EEQSKAKRQEV.

The protein belongs to the rabaptin family. Heterodimer with RABGEF1. The dimer binds RAB5A that has been activated by GTP-binding. Interacts with SDCCAG8; this interaction is important for ciliogenesis regulation. Interacts with RAB4; this interaction may mediate VEGFR2 cell surface expression.

It is found in the cytoplasm. Its subcellular location is the early endosome. The protein resides in the cytoskeleton. The protein localises to the microtubule organizing center. It localises to the centrosome. It is found in the cilium basal body. Its function is as follows. Plays a role in membrane trafficking and in homotypic early endosome fusion. Participates in arteriogenesis by regulating vascular endothelial growth factor receptor 2/VEGFR2 cell surface expression and endosomal trafficking. By interacting with SDCCAG8, localizes to centrosomes and plays a critical role in ciliogenesis. This Bos taurus (Bovine) protein is Rab GTPase-binding effector protein 2 (RABEP2).